The primary structure comprises 233 residues: MGQKVHPNGMRLGIIKKWNSVWFANTKDFADHLDSDYKVRQFLMKKLVKASVSRIIIERPAKSIRVTIYTARPGIVIGKKGEDVEKLRINIAKITGVPAQINISEVRKPELDAKLVSESITSQLERRVMFRRAMKRSVQNAMRQGAKGIKVEVSGRLGGAEIARREWYREGRVPLHTLRANIDYSISEAHTTYGVIGVKVWIFKGEILGGMSTIEKLEKSSIQIKKQHRKNRK.

The 69-residue stretch at 39–107 folds into the KH type-2 domain; that stretch reads VRQFLMKKLV…PAQINISEVR (69 aa).

It belongs to the universal ribosomal protein uS3 family. Part of the 30S ribosomal subunit. Forms a tight complex with proteins S10 and S14.

Binds the lower part of the 30S subunit head. Binds mRNA in the 70S ribosome, positioning it for translation. The protein is Small ribosomal subunit protein uS3 of Buchnera aphidicola subsp. Schizaphis graminum (strain Sg).